The following is a 328-amino-acid chain: Cytochrome c biogenesis protein CcsA (328 aa).

8 consecutive transmembrane segments (helical) span residues 13 to 33, 46 to 66, 73 to 93, 101 to 121, 146 to 166, 234 to 254, 263 to 283, and 295 to 315; these read ISFSVVSIVLIIYFLTLLVNL, GIIITFFGITGLLLTRWIFSG, LYESLIFLSWAFSIIHMVSYF, LNAITAPSAIFIQGFATSGLL, MILGYGALLCGSLLSIALLVI, IISLGFIFLTVGILSGAVWAN, WDPKETWAFITWTIFAIYLHI, and AIVASIGFLLIWICYFGVNLL.

The protein belongs to the CcmF/CycK/Ccl1/NrfE/CcsA family. In terms of assembly, may interact with Ccs1.

It is found in the plastid. The protein localises to the chloroplast thylakoid membrane. Functionally, required during biogenesis of c-type cytochromes (cytochrome c6 and cytochrome f) at the step of heme attachment. This chain is Cytochrome c biogenesis protein CcsA, found in Olimarabidopsis pumila (Dwarf rocket).